A 708-amino-acid chain; its full sequence is Leukotoxin translocation ATP-binding protein LktB (708 aa).

In terms of domain architecture, Peptidase C39 spans 1-126; sequence MEANHQRNDL…ACYQGQLILV (126 aa). The 283-residue stretch at 155–437 folds into the ABC transmembrane type-1 domain; sequence FLETLIVSIF…LAQLWQDFQQ (283 aa). 5 helical membrane passes run 159–179, 192–212, 270–290, 296–316, and 389–409; these read LIVS…FQVV, LNII…LSGL, ALTS…MWYY, LVIL…SPIL, and VMVI…LSIG. One can recognise an ABC transporter domain in the interval 469–704; that stretch reads ISFKNIRFRY…SNGLYSYLHQ (236 aa). Residue 503–510 coordinates ATP; that stretch reads GRSGSGKS.

It belongs to the ABC transporter superfamily. Protein-1 exporter (TC 3.A.1.109) family. In terms of assembly, homodimer.

The protein localises to the cell inner membrane. The enzyme catalyses ATP + H2O + proteinSide 1 = ADP + phosphate + proteinSide 2.. Functionally, part of the ABC transporter complex LktBD involved in leukotoxin export. Transmembrane domains (TMD) form a pore in the inner membrane and the ATP-binding domain (NBD) is responsible for energy generation. This chain is Leukotoxin translocation ATP-binding protein LktB (lktB), found in Mannheimia haemolytica (Pasteurella haemolytica).